A 324-amino-acid polypeptide reads, in one-letter code: MKQVNGEKLLASLGDSVKDIRGRLTPDAPMDRVTWFRAGGLAELMFQPHDTDDLIDFLKILPDDVPLTVVGVGSNILVRDGGIPGVVLRLSAKGFGSVELAGENRILAGAICPDKHVAAMAMDNGIGGFHFYYGIPGGIGGAARMNAGANGAETCERVIEVHAVDRKGVKHVLTNDQMGYTYRHSAAADDLIFTHVLFEGYPEDRTKIRAEMDAVRAHRETVQPIREKTGGSTFKNPDGLSAWKLIDEAGCRGLVIGGAQMSSLHCNFMINMEQATGYDLEYLGEQVRREVFEKSGVKLEWEIKRLGGFMPGREVRPFQGVTTE.

An FAD-binding PCMH-type domain is found at 36 to 217 (FRAGGLAELM…IRAEMDAVRA (182 aa)). The active site involves Arg183. The active-site Proton donor is the Ser232. Glu302 is an active-site residue.

Belongs to the MurB family. Requires FAD as cofactor.

It is found in the cytoplasm. The enzyme catalyses UDP-N-acetyl-alpha-D-muramate + NADP(+) = UDP-N-acetyl-3-O-(1-carboxyvinyl)-alpha-D-glucosamine + NADPH + H(+). It participates in cell wall biogenesis; peptidoglycan biosynthesis. Cell wall formation. The sequence is that of UDP-N-acetylenolpyruvoylglucosamine reductase from Rhizobium rhizogenes (strain K84 / ATCC BAA-868) (Agrobacterium radiobacter).